Here is a 290-residue protein sequence, read N- to C-terminus: MAVTAALVKELRERTAAGMLDCKNALVEANGDIELAIENMRKNGQAKAAKKAGRIAAEGVILTKVANGVATMIELNSETDFVARDEGFIAFGSKLIEVASANKINDIETLNDSVVDGVKVSDARDTLVAKIGENISPRRVISVEGDNLGAYVHGGRIGVIAILQGGDEELAKDIAMHVAAANPQFVKPTDVPAEVVAKEKEIQLDIAMQSGKPADIAEKMVSGRMNKFTSEVSLTGQAFIKDPSTSVAQLLKAKNADVINFVRFEVGEGIEKKEEDFAAEVAAQMAAAKK.

Residues 79-82 (TDFV) form an involved in Mg(2+) ion dislocation from EF-Tu region.

Belongs to the EF-Ts family.

It localises to the cytoplasm. In terms of biological role, associates with the EF-Tu.GDP complex and induces the exchange of GDP to GTP. It remains bound to the aminoacyl-tRNA.EF-Tu.GTP complex up to the GTP hydrolysis stage on the ribosome. The sequence is that of Elongation factor Ts from Pseudoalteromonas atlantica (strain T6c / ATCC BAA-1087).